A 166-amino-acid chain; its full sequence is MPEFLDIRPLTRLAFAPFGEVIEADPASMRLINGGTTERFHALAAAEAAGEGARVIINLFRGQPRSFPYAVDMMERHPFGSQSFSPVSGRPFLVVVSEDEGGRPGRPQVFLARGDQGVNYRRNVWHHPLMALGQASDFLVVDRDGPGNNLEEFFFETPFVIKEPAS.

This sequence belongs to the ureidoglycolate lyase family. In terms of assembly, homodimer. Requires Ni(2+) as cofactor.

The enzyme catalyses (S)-ureidoglycolate = urea + glyoxylate. It functions in the pathway nitrogen metabolism; (S)-allantoin degradation. Catalyzes the catabolism of the allantoin degradation intermediate (S)-ureidoglycolate, generating urea and glyoxylate. Involved in the utilization of allantoin as nitrogen source. The sequence is that of Ureidoglycolate lyase from Rhizobium etli (strain CIAT 652).